A 910-amino-acid polypeptide reads, in one-letter code: Eukaryotic translation initiation factor 3 subunit C (910 aa).

Residues 1 to 21 (MSRFFANGSDSESESSEDEIQ) are disordered. Acidic residues predominate over residues 11–20 (SESESSEDEI). Serine 34, serine 165, serine 176, and serine 185 each carry phosphoserine. Positions 157–279 (FREAPDQESE…IRKRAEDDED (123 aa)) are disordered. Over residues 162–186 (DQESEAEDEVVALESDGGDAGDDSD) the composition is skewed to acidic residues. The segment covering 188–207 (GVKPTEAAPKAVKTAPAKAA) has biased composition (low complexity). Over residues 209–235 (ADDDDSDDSIDWDSDSESETESSDDEN) the composition is skewed to acidic residues. A compositionally biased stretch (basic and acidic residues) spans 240-268 (MRERFLKRTTEKEEKDDDKRKDKRKEQKI). The 177-residue stretch at 639–815 (FHMHINLELL…ETVVMHRSEP (177 aa)) folds into the PCI domain. Residues 847–910 (FFQRGNMGNR…QQQVQTIDEE (64 aa)) are disordered. Residues 862 to 874 (NRNQNNQGGNWLG) show a composition bias toward low complexity. The span at 882–891 (RNRNQRGHHK) shows a compositional bias: basic residues. A compositionally biased stretch (low complexity) spans 895-910 (DRQQQQQQQVQTIDEE).

This sequence belongs to the eIF-3 subunit C family. In terms of assembly, component of the eukaryotic translation initiation factor 3 (eIF-3) complex. The eIF-3 complex interacts with pix.

It is found in the cytoplasm. In terms of biological role, component of the eukaryotic translation initiation factor 3 (eIF-3) complex, which is involved in protein synthesis of a specialized repertoire of mRNAs and, together with other initiation factors, stimulates binding of mRNA and methionyl-tRNAi to the 40S ribosome. The eIF-3 complex specifically targets and initiates translation of a subset of mRNAs involved in cell proliferation. This Drosophila erecta (Fruit fly) protein is Eukaryotic translation initiation factor 3 subunit C.